We begin with the raw amino-acid sequence, 166 residues long: Protein SprT (166 aa).

In terms of domain architecture, SprT-like spans 19–164 (REHLAKANLK…CVHCGDLLVA (146 aa)). His78 provides a ligand contact to Zn(2+). Glu79 is a catalytic residue. His82 serves as a coordination point for Zn(2+).

The protein belongs to the SprT family. Zn(2+) is required as a cofactor.

It localises to the cytoplasm. The chain is Protein SprT from Klebsiella pneumoniae (strain 342).